The chain runs to 277 residues: Large ribosomal subunit protein uL2 (277 aa).

The interval 222–277 (GVAMNPVDHPHGGGEGRTSGGRHPVTPWGKPTKGKKTRSNKATDKFIMRSRHQRKK) is disordered.

This sequence belongs to the universal ribosomal protein uL2 family. Part of the 50S ribosomal subunit. Forms a bridge to the 30S subunit in the 70S ribosome.

Functionally, one of the primary rRNA binding proteins. Required for association of the 30S and 50S subunits to form the 70S ribosome, for tRNA binding and peptide bond formation. It has been suggested to have peptidyltransferase activity; this is somewhat controversial. Makes several contacts with the 16S rRNA in the 70S ribosome. This Brucella abortus (strain S19) protein is Large ribosomal subunit protein uL2.